Reading from the N-terminus, the 528-residue chain is MNHRHRQEIDRRRTFGIISHPDAGKTTLTEKLLLFGGAIQLAGAVKARKASRHATSDWMAIERERGISVTTSVMKFNYRDFEINLLDTPGHQDFSEDTYRVLTAVDSALMVIDSAKGVEPQTEKLMEVCRMRNTPIITFINKLDREGQSPLALLGEIEDKLQIECTPLSWPIGSGKSFKGVYDLLGKKLHLFAPGQETRTNGGMVFDDLSDAALDELLGRQAVQLREDVELLEGAANPLEQEHYLRGNQTPVFFGSALNNFGVRELLDAFVQMAPPPHARPTVSREVSPYEDQFSGFVFKIQANMDPAHRDRIAFLRICSGKYTRGMKVIHHRAGREMNIANATIFLAQDRTNIDEAYPGDIIGIHNHGTIKIGDTFTEKEPLRFTGIPSFAPEHFRRVILKNPLKVKQLRKGLAQLTEEGAVQVFRPLAARDYILGAVGVLQFDVTVARLRTEYGVDADYEPAGYAAARWVESDSRNVMEEFEKENRGSLALDGEDRLTYLAPNEWRLGFVMEDWPRIRFRKSMECN.

A tr-type G domain is found at 10-278; it reads DRRRTFGIIS…AFVQMAPPPH (269 aa). GTP-binding positions include 19–26, 87–91, and 141–144; these read SHPDAGKT, DTPGH, and NKLD.

The protein belongs to the TRAFAC class translation factor GTPase superfamily. Classic translation factor GTPase family. PrfC subfamily.

It is found in the cytoplasm. In terms of biological role, increases the formation of ribosomal termination complexes and stimulates activities of RF-1 and RF-2. It binds guanine nucleotides and has strong preference for UGA stop codons. It may interact directly with the ribosome. The stimulation of RF-1 and RF-2 is significantly reduced by GTP and GDP, but not by GMP. This is Peptide chain release factor 3 from Syntrophobacter fumaroxidans (strain DSM 10017 / MPOB).